The primary structure comprises 297 residues: MDKQEAKHINMPSPSACEHKSVEAYLFIDPLCKDCWEIEPFIIKLWLEYGKYFSIRHIVTGKVDGTNASSHKWNKPANIRFVWEKTTSLHGFSCDGKVHMQEASSTPYLVSMAIKAAELQGRKAGSKFLRKLQEYIFLENVSNPDCELLLACAKDSDIDVEEFKKDLYSASAKKAFQCDLKFTNEMHITEIPSLVFFHANSDEEGIKIAGTYSYDVYVQLLKELVKCEIEPEPLPPLEVLLEATQFISSKEVAFIYDCSKQEIERELKKLQLKRKVQMIDVKCERYWKWIAKEKDLV.

It belongs to the SpxH family. As to quaternary structure, interacts with Spx.

It localises to the cytoplasm. In terms of biological role, adapter protein required for efficient degradation of Spx by ClpXP under non-stress conditions. Interaction with Spx stabilizes Spx and exposes the C-terminus of Spx for recognition and proteolysis by ClpXP. The chain is ClpXP adapter protein SpxH from Bacillus thuringiensis subsp. konkukian (strain 97-27).